We begin with the raw amino-acid sequence, 76 residues long: UPF0291 protein BC_1827 (76 aa).

This sequence belongs to the UPF0291 family.

The protein localises to the cytoplasm. The polypeptide is UPF0291 protein BC_1827 (Bacillus cereus (strain ATCC 14579 / DSM 31 / CCUG 7414 / JCM 2152 / NBRC 15305 / NCIMB 9373 / NCTC 2599 / NRRL B-3711)).